The chain runs to 501 residues: Glutamate--tRNA ligase (501 aa).

Positions 10–20 (PSPTGSLHIGG) match the 'HIGH' region motif. A 'KMSKS' region motif is present at residues 251 to 255 (KLSKR). Residue K254 coordinates ATP.

Belongs to the class-I aminoacyl-tRNA synthetase family. Glutamate--tRNA ligase type 1 subfamily. As to quaternary structure, monomer.

The protein resides in the cytoplasm. It catalyses the reaction tRNA(Glu) + L-glutamate + ATP = L-glutamyl-tRNA(Glu) + AMP + diphosphate. Catalyzes the attachment of glutamate to tRNA(Glu) in a two-step reaction: glutamate is first activated by ATP to form Glu-AMP and then transferred to the acceptor end of tRNA(Glu). The protein is Glutamate--tRNA ligase of Desulforudis audaxviator (strain MP104C).